Here is a 337-residue protein sequence, read N- to C-terminus: Tetraacyldisaccharide 4'-kinase (337 aa).

ATP is bound at residue 56 to 63 (VAGGAGKT).

This sequence belongs to the LpxK family.

It catalyses the reaction a lipid A disaccharide + ATP = a lipid IVA + ADP + H(+). The protein operates within glycolipid biosynthesis; lipid IV(A) biosynthesis; lipid IV(A) from (3R)-3-hydroxytetradecanoyl-[acyl-carrier-protein] and UDP-N-acetyl-alpha-D-glucosamine: step 6/6. Functionally, transfers the gamma-phosphate of ATP to the 4'-position of a tetraacyldisaccharide 1-phosphate intermediate (termed DS-1-P) to form tetraacyldisaccharide 1,4'-bis-phosphate (lipid IVA). This chain is Tetraacyldisaccharide 4'-kinase, found in Rhodospirillum centenum (strain ATCC 51521 / SW).